A 702-amino-acid polypeptide reads, in one-letter code: Autophagy-related protein 9 (702 aa).

Topologically, residues 1–205 (MFYQPAQNKK…GKGLSCIIVH (205 aa)) are cytoplasmic. Residues 35-128 (QESLDSDEDE…SKQKPALPNF (94 aa)) are disordered. A compositionally biased stretch (acidic residues) spans 38–47 (LDSDEDESSP). The segment covering 94 to 107 (SSKVPSKHPSPSFP) has biased composition (low complexity). Residues 108 to 120 (ETTSLRNLQNGSK) are compositionally biased toward polar residues. The chain crosses the membrane as a helical span at residues 206 to 223 (RLFQILTVSFVIGFTTFI). Residues 224 to 251 (TSCIDWPAVTPHGSLAGVTKSQCIAQMS) are Lumenal-facing. A helical transmembrane segment spans residues 252-270 (PITYLVLWLFLSFLLALWI). Over 271–421 (YYLTDIPRLW…RRRFIVAGFL (151 aa)) the chain is Cytoplasmic. An intramembrane segment occupies 422–446 (NCLFAPIVAIYLVIHNFFRYFNEYH). Over 447 to 496 (KNPGALSTRRYTPLALWTFREYNELQHFFDERINDSYAAASHYVSQFPDF) the chain is Cytoplasmic. A helical transmembrane segment spans residues 497–522 (NMIRLFKYISFILGSFTAILVIITVF). Topologically, residues 523–537 (DPELMVTFEITKDRS) are lumenal. Residues 538–555 (VLFYLGLFGSLIAVSRSI) traverse the membrane as a helical segment. At 556–603 (IPDETLVFAPEKALRRVITFTHYMPGWWSDNMHSKAVQQEFCSLYSYR) the chain is on the cytoplasmic side. An intramembrane segment occupies 604-624 (IVNLLWEILGILLTPVLLFFT). Residues 625–702 (FPSCSQDIVD…NTEAPRRDLR (78 aa)) are Cytoplasmic-facing.

This sequence belongs to the ATG9 family. Homotrimer; forms a homotrimer with a central pore that forms a path between the two membrane leaflets. Interacts with ctl1. Post-translationally, phosphorylated by atg1. Atg1 phosphorylation is required for preautophagosome elongation.

The protein resides in the preautophagosomal structure membrane. It is found in the cytoplasmic vesicle membrane. The protein localises to the golgi apparatus membrane. It localises to the endoplasmic reticulum membrane. It catalyses the reaction a 1,2-diacyl-sn-glycero-3-phosphocholine(in) = a 1,2-diacyl-sn-glycero-3-phosphocholine(out). It carries out the reaction a 1,2-diacyl-sn-glycero-3-phospho-L-serine(in) = a 1,2-diacyl-sn-glycero-3-phospho-L-serine(out). The catalysed reaction is a 1,2-diacyl-sn-glycero-3-phosphoethanolamine(in) = a 1,2-diacyl-sn-glycero-3-phosphoethanolamine(out). The enzyme catalyses a 1,2-diacyl-sn-glycero-3-phospho-(1D-myo-inositol-3-phosphate)(in) = a 1,2-diacyl-sn-glycero-3-phospho-(1D-myo-inositol-3-phosphate)(out). Phospholipid scramblase involved in autophagy and cytoplasm to vacuole transport (Cvt) vesicle formation. Cycles between the preautophagosomal structure/phagophore assembly site (PAS) and the cytoplasmic vesicle pool and supplies membrane for the growing autophagosome. Lipid scramblase activity plays a key role in preautophagosomal structure/phagophore assembly by distributing the phospholipids that arrive through atg2 from the cytoplasmic to the luminal leaflet of the bilayer, thereby driving autophagosomal membrane expansion. Also involved in endoplasmic reticulum-specific autophagic process and is essential for the survival of cells subjected to severe ER stress. Different machineries are required for anterograde trafficking to the PAS during either the Cvt pathway or bulk autophagy and for retrograde trafficking. Has a role in meiosis and sporulation. The sequence is that of Autophagy-related protein 9 from Schizosaccharomyces pombe (strain 972 / ATCC 24843) (Fission yeast).